The primary structure comprises 206 residues: Large ribosomal subunit protein uL4 (206 aa).

The segment at 49 to 76 (QSAKTRTEVRGGGIKPWRQKGTGRARQG) is disordered.

It belongs to the universal ribosomal protein uL4 family. As to quaternary structure, part of the 50S ribosomal subunit.

One of the primary rRNA binding proteins, this protein initially binds near the 5'-end of the 23S rRNA. It is important during the early stages of 50S assembly. It makes multiple contacts with different domains of the 23S rRNA in the assembled 50S subunit and ribosome. Functionally, forms part of the polypeptide exit tunnel. This Clostridium botulinum (strain Alaska E43 / Type E3) protein is Large ribosomal subunit protein uL4.